The primary structure comprises 230 residues: V-type proton ATPase subunit E (230 aa).

The protein belongs to the V-ATPase E subunit family. V-ATPase is a heteromultimeric enzyme composed of a peripheral catalytic V1 complex (components A to H) attached to an integral membrane V0 proton pore complex (components: a, c, c', c'', d, e, f and VOA1).

The protein resides in the vacuole membrane. In terms of biological role, subunit of the V1 complex of vacuolar(H+)-ATPase (V-ATPase), a multisubunit enzyme composed of a peripheral complex (V1) that hydrolyzes ATP and a membrane integral complex (V0) that translocates protons. V-ATPase is responsible for acidifying and maintaining the pH of intracellular compartments. The polypeptide is V-type proton ATPase subunit E (Neurospora crassa (strain ATCC 24698 / 74-OR23-1A / CBS 708.71 / DSM 1257 / FGSC 987)).